The sequence spans 467 residues: Probable receptor-like protein kinase At3g17420 (467 aa).

The N-terminal stretch at M1–V35 is a signal peptide. Residues L36–A123 lie on the Extracellular side of the membrane. N-linked (GlcNAc...) asparagine glycosylation occurs at N50. Residue S70 is modified to Phosphoserine. A glycan (N-linked (GlcNAc...) asparagine) is linked at N79. The segment at G102–P126 is disordered. A helical membrane pass occupies residues P124–L144. The Cytoplasmic segment spans residues R145–I467. Residues F154–M433 form the Protein kinase domain. ATP is bound by residues I160–V168 and K182. Y227 is subject to Phosphotyrosine. D280 functions as the Proton acceptor in the catalytic mechanism. Phosphoserine is present on residues S284 and S313. Phosphothreonine occurs at positions 314 and 319. Position 327 is a phosphotyrosine (Y327). The segment at D413–I467 is disordered. A compositionally biased stretch (basic and acidic residues) spans E447–I467.

The protein belongs to the protein kinase superfamily. Ser/Thr protein kinase family.

It is found in the cell membrane. It carries out the reaction L-seryl-[protein] + ATP = O-phospho-L-seryl-[protein] + ADP + H(+). The catalysed reaction is L-threonyl-[protein] + ATP = O-phospho-L-threonyl-[protein] + ADP + H(+). The protein is Probable receptor-like protein kinase At3g17420 of Arabidopsis thaliana (Mouse-ear cress).